We begin with the raw amino-acid sequence, 751 residues long: MVHLPLSRSRSGRRAVPDLSRYQQFYEADAADGYSTGSGLSSAAASVASLRRPGVGMGRTQSLTGYGRTRSLGAARPSYLGAPPRTYSMSSQRRANSLRSNNGFGPPAVAAGNTITVKTTETKDLQGRTRTVTRQTVKHINGVRYVETTTTMTMPDGEYPDDFYGFEGDFTAKQTSSGHVYQNARGAPDISDIAEEESLEEYLDARDTAPALRIQLRAPPRVQQQRQLQRQRRLSDTNFPARRSAKSSPARQSSEEPPATTKPHRIRFDETPQIVGIDPPTQKKAPKKQMTEQEMYMHALDAARKKVYGEISQPALEAKQPHRSTMSKRMTLRDEATLAANTPPERSRPAKREVRKKEGHSHHNFLSVLRRDSSPKRHAVQPSERVHNKEKTLEMTPDSSSASSYEEARFEHSDEMYNKALEVAKKKYHLTQENSTRDNGTTECPRTPMTSLMSTNVSSDTAESTLLGTPVYSSNAPFDRSPQPSSGCETGNTTPKSIPRRPSFLDKLVRFSQEKYGYRPRRSISSQGHKAEHEHVFTDDIPPLPDIPLVDPMQVKPKDVPLPTVEPALGPTDVSPARVADPESNIETPRTLAPARSSISSSPRRSSPPQAFQELVPLQSTQSETTGDLADALALGDNSLDLLPGRVSEISPKTSFEHFVLAPEVPETDEKPAAAPAVAAEAPLSNPPSVVVVPSATSSVPAAQGAAPGVAVTEGPSLGGPAAPVRALHATKTAAAPAKKRSFFHKLFKKY.

Disordered regions lie at residues G54 to S88, L216 to M290, P314 to F410, T431 to F504, and K558 to Q610. Residues L216–L228 show a composition bias toward low complexity. Basic and acidic residues-rich tracts occupy residues E345 to K356 and E384 to L393. Polar residues predominate over residues T431 to K496. Low complexity predominate over residues R596 to P609.

It is found in the cell membrane. Functionally, may be involved in the control of meiotic sister-chromatid recombination. The polypeptide is Meiotic sister-chromatid recombination protein 3 (MSC3) (Eremothecium gossypii (strain ATCC 10895 / CBS 109.51 / FGSC 9923 / NRRL Y-1056) (Yeast)).